The chain runs to 797 residues: Sodium/hydrogen exchanger 4 (797 aa).

Over 1 to 13 (MGPAMFMAFRLWN) the chain is Cytoplasmic. An intramembrane region (name=A/M1) is located at residues 14 to 28 (WLLLLAVLTRSEATS). Topologically, residues 29–69 (YVNESSNPTAQQAPDARFAASSSDPDEGISVFELDYDYVQI) are cytoplasmic. The interval 32-52 (ESSNPTAQQAPDARFAASSSD) is disordered. An intramembrane region (name=B/M2) is located at residues 70–90 (PYEVTLWILLASLAKIGFHLY). Over 91–94 (HRLP) the chain is Cytoplasmic. A helical membrane pass occupies residues 95 to 114 (HLMPESCLLIIVGALVGGII). The Extracellular segment spans residues 115-127 (FGTHHKSPPVMDS). Residues 128–148 (SIYFLYLLPPIVLESGYFMPT) traverse the membrane as a helical segment. Topologically, residues 149 to 154 (RPFFEN) are cytoplasmic. The chain crosses the membrane as a helical span at residues 155–175 (IGSILWWAGLGALINAFGIGL). The Extracellular segment spans residues 176–194 (SLYFICQIKAFGLGDINLL). Residues 195-215 (HNLLFGSLISAVDPVAVLAVF) traverse the membrane as a helical segment. The Cytoplasmic portion of the chain corresponds to 216-226 (EEARVNEQLYM). The helical transmembrane segment at 227–247 (MIFGEALLNDGISVVLYNILI) threads the bilayer. At 248 to 270 (AFTKMHKFEDIEAVDILAGCARF) the chain is on the extracellular side. A helical membrane pass occupies residues 271 to 291 (VIVGCGGVFFGIIFGFISAFI). Over 292 to 304 (TRFTQNISAIEPL) the chain is Cytoplasmic. A helical membrane pass occupies residues 305 to 325 (IVFMFSYLSYLAAETLYLSGI). Topologically, residues 326 to 352 (LAITACAVTMKKYVEENVSQTSYTTIK) are extracellular. A glycan (N-linked (GlcNAc...) asparagine) is linked at Asn342. A helical membrane pass occupies residues 353–373 (YFMKMLSSVSETLIFIFMGVS). Residues 374-384 (TIGKNHEWNWA) are Cytoplasmic-facing. The helical transmembrane segment at 385-405 (FICFTLLFCQIWRAISVFTLF) threads the bilayer. At 406–420 (YVSNQFRTFPFSIKD) the chain is on the extracellular side. The name=L intramembrane region spans 421–441 (QFIIFYSGVRGAGSFSLAFLL). At 442–450 (PLSLFPRKK) the chain is on the extracellular side. A helical membrane pass occupies residues 451–471 (LFVTATLVVTYFTVFFQGITI). At 472–797 (GPLVRYLDVR…KSHSPLLHRK (326 aa)) the chain is on the cytoplasmic side. Over residues 759 to 769 (YDSGEQTEEET) the composition is skewed to acidic residues. The disordered stretch occupies residues 759 to 797 (YDSGEQTEEETSAILSRWTAEHRHSTEHHKSHSPLLHRK). Residues 783–797 (STEHHKSHSPLLHRK) are compositionally biased toward basic residues.

Belongs to the monovalent cation:proton antiporter 1 (CPA1) transporter (TC 2.A.36) family. Homodimer; each protomer has one site for sodium and one site for proton binding. Interacts with CHP1 and CHP2. May be phosphorylated. Expressed in kidney. Expressed in uterus and endometrial epithelial cells. Expressed in the inner segments of inner medullary collecting ducts (IMCD) in kidney. Expressed in AGTR1-positive neurons in organum vasculosum of the lamina terminalis (at protein level).

It localises to the basolateral cell membrane. The protein localises to the apical cell membrane. The protein resides in the zymogen granule membrane. It catalyses the reaction Na(+)(in) + H(+)(out) = Na(+)(out) + H(+)(in). It carries out the reaction Na(+)(out) + NH4(+)(in) = Na(+)(in) + NH4(+)(out). Up-regulated in response to high extracellular sodium concentration. Electroneutral antiporter that exchanges sodium for protons or ammonium ions at the basolateral membrane of epithelia to regulate cell volume and intracellular pH upon hypertonic conditions. As part of transcellular ammonia transport in renal tubules, mediates basolateral ammonium extrusion in the medullary thick ascending limb, regulating the corticopapillary ammonium gradient and overall renal acid excretion. Mediates sodium:proton exchange in gastric parietal cells secondary to cAMP-dependent acid secretion and hyperosmolarity. Possibly coupled to chloride:bicarbonate antiporter, enables loading of parietal cells with sodium and chloride ions to maintain cell volume and normal gastric acid secretion. Functions as a sodium sensor in neurons of organum vasculosum of the lamina terminalis where it regulates water intake in response to increased sodium concentration in body fluids. The sequence is that of Sodium/hydrogen exchanger 4 (Slc9a4) from Mus musculus (Mouse).